The sequence spans 361 residues: MRQSLKVMVLSTVALLFMANPAAASEEKKEYLIVVEPEEVSAQSVEESYDVDVIHEFEEIPVIHAELTKKELKKLKKDPNVKAIEKNAEVTISQTVPWGISFINTQQAHNRGIFGNGARVAVLDTGIASHPDLRIAGGASFISSEPSYHDNNGHGTHVAGTIAALNNSIGVLGVAPSADLYAVKVLDRNGSGSLASVAQGIEWAINNNMHIINMSLGSTSGSSTLELAVNRANNAGILLVGAAGNTGRQGVNYPARYSGVMAVAAVDQNGQRASFSTYGPEIEISAPGVNVNSTYTGNRYVSLSGTSMATPHVAGVAALVKSRYPSYTNNQIRQRINQTATYLGSPSLYGNGLVHAGRATQ.

The N-terminal stretch at 1 to 24 is a signal peptide; that stretch reads MRQSLKVMVLSTVALLFMANPAAA. Positions 25 to 93 are excised as a propeptide; sequence SEEKKEYLIV…IEKNAEVTIS (69 aa). A Ca(2+)-binding site is contributed by Gln94. Positions 97 to 360 constitute a Peptidase S8 domain; sequence PWGISFINTQ…NGLVHAGRAT (264 aa). The active-site Charge relay system is the Asp124. Asp132 is a Ca(2+) binding site. The Charge relay system role is filled by His154. The Ca(2+) site is built by Leu165, Asn167, Ile169, Val171, Ala255, Tyr257, and Val260. Ser307 serves as the catalytic Charge relay system.

It belongs to the peptidase S8 family. The cofactor is Ca(2+).

The protein resides in the secreted. Shows keratinolytic activity. The protein is Thermostable alkaline protease of Halalkalibacterium halodurans (strain ATCC BAA-125 / DSM 18197 / FERM 7344 / JCM 9153 / C-125) (Bacillus halodurans).